Consider the following 359-residue polypeptide: Phosphoserine aminotransferase (359 aa).

R42 contacts L-glutamate. Pyridoxal 5'-phosphate contacts are provided by residues A76–S77, W102, T152, D171, and Q194. K195 carries the N6-(pyridoxal phosphate)lysine modification. N236–T237 contributes to the pyridoxal 5'-phosphate binding site.

The protein belongs to the class-V pyridoxal-phosphate-dependent aminotransferase family. SerC subfamily. As to quaternary structure, homodimer. Pyridoxal 5'-phosphate serves as cofactor.

The protein resides in the cytoplasm. It carries out the reaction O-phospho-L-serine + 2-oxoglutarate = 3-phosphooxypyruvate + L-glutamate. It catalyses the reaction 4-(phosphooxy)-L-threonine + 2-oxoglutarate = (R)-3-hydroxy-2-oxo-4-phosphooxybutanoate + L-glutamate. It participates in amino-acid biosynthesis; L-serine biosynthesis; L-serine from 3-phospho-D-glycerate: step 2/3. Its pathway is cofactor biosynthesis; pyridoxine 5'-phosphate biosynthesis; pyridoxine 5'-phosphate from D-erythrose 4-phosphate: step 3/5. Catalyzes the reversible conversion of 3-phosphohydroxypyruvate to phosphoserine and of 3-hydroxy-2-oxo-4-phosphonooxybutanoate to phosphohydroxythreonine. The chain is Phosphoserine aminotransferase from Ruthia magnifica subsp. Calyptogena magnifica.